Consider the following 119-residue polypeptide: Protein TusC (119 aa).

Belongs to the DsrF/TusC family. Heterohexamer, formed by a dimer of trimers. The hexameric TusBCD complex contains 2 copies each of TusB, TusC and TusD. The TusBCD complex interacts with TusE.

The protein resides in the cytoplasm. Functionally, part of a sulfur-relay system required for 2-thiolation of 5-methylaminomethyl-2-thiouridine (mnm(5)s(2)U) at tRNA wobble positions. This is Protein TusC from Photorhabdus laumondii subsp. laumondii (strain DSM 15139 / CIP 105565 / TT01) (Photorhabdus luminescens subsp. laumondii).